The chain runs to 627 residues: Hemocyanin D chain (627 aa).

Residues His-171, His-175, His-202, His-322, His-326, and His-362 each coordinate Cu cation. N-linked (GlcNAc...) asparagine glycosylation occurs at Asn-445. The cysteines at positions 531 and 579 are disulfide-linked.

Belongs to the tyrosinase family. Hemocyanin subfamily. Tarantula hemocyanin is a 24-chain polymer with seven different chains identified. Hemolymph.

The protein localises to the secreted. The protein resides in the extracellular space. Hemocyanins are copper-containing oxygen carriers occurring freely dissolved in the hemolymph of many mollusks and arthropods. This is Hemocyanin D chain (HCD) from Aphonopelma sp. (American tarantula).